A 175-amino-acid chain; its full sequence is Large ribosomal subunit protein uL10 (175 aa).

Belongs to the universal ribosomal protein uL10 family. In terms of assembly, part of the ribosomal stalk of the 50S ribosomal subunit. The N-terminus interacts with L11 and the large rRNA to form the base of the stalk. The C-terminus forms an elongated spine to which L12 dimers bind in a sequential fashion forming a multimeric L10(L12)X complex.

Its function is as follows. Forms part of the ribosomal stalk, playing a central role in the interaction of the ribosome with GTP-bound translation factors. The sequence is that of Large ribosomal subunit protein uL10 from Desulfotalea psychrophila (strain LSv54 / DSM 12343).